We begin with the raw amino-acid sequence, 887 residues long: DNA mismatch repair protein MutS (887 aa).

Position 602–609 (602–609 (GPNMSGKS)) interacts with ATP.

It belongs to the DNA mismatch repair MutS family.

In terms of biological role, this protein is involved in the repair of mismatches in DNA. It is possible that it carries out the mismatch recognition step. This protein has a weak ATPase activity. This Staphylococcus saprophyticus subsp. saprophyticus (strain ATCC 15305 / DSM 20229 / NCIMB 8711 / NCTC 7292 / S-41) protein is DNA mismatch repair protein MutS.